Here is a 288-residue protein sequence, read N- to C-terminus: uncharacterized protein (288 aa).

This is an uncharacterized protein from Acanthamoeba polyphaga mimivirus (APMV).